The sequence spans 378 residues: Protein RecA (378 aa).

79–86 (GPESSGKT) provides a ligand contact to ATP.

The protein belongs to the RecA family.

Its subcellular location is the cytoplasm. Can catalyze the hydrolysis of ATP in the presence of single-stranded DNA, the ATP-dependent uptake of single-stranded DNA by duplex DNA, and the ATP-dependent hybridization of homologous single-stranded DNAs. It interacts with LexA causing its activation and leading to its autocatalytic cleavage. In Streptococcus pyogenes serotype M28 (strain MGAS6180), this protein is Protein RecA.